The chain runs to 559 residues: Sulfite reductase [NADPH] hemoprotein beta-component (559 aa).

Residues cysteine 423, cysteine 429, cysteine 468, and cysteine 472 each contribute to the [4Fe-4S] cluster site. Cysteine 472 contributes to the siroheme binding site.

This sequence belongs to the nitrite and sulfite reductase 4Fe-4S domain family. In terms of assembly, alpha(8)-beta(8). The alpha component is a flavoprotein, the beta component is a hemoprotein. Siroheme is required as a cofactor. The cofactor is [4Fe-4S] cluster.

The catalysed reaction is hydrogen sulfide + 3 NADP(+) + 3 H2O = sulfite + 3 NADPH + 4 H(+). It participates in sulfur metabolism; hydrogen sulfide biosynthesis; hydrogen sulfide from sulfite (NADPH route): step 1/1. In terms of biological role, component of the sulfite reductase complex that catalyzes the 6-electron reduction of sulfite to sulfide. This is one of several activities required for the biosynthesis of L-cysteine from sulfate. The polypeptide is Sulfite reductase [NADPH] hemoprotein beta-component (Thiocapsa roseopersicina).